Consider the following 89-residue polypeptide: Small ribosomal subunit protein uS19 (89 aa).

The protein belongs to the universal ribosomal protein uS19 family.

Protein S19 forms a complex with S13 that binds strongly to the 16S ribosomal RNA. This is Small ribosomal subunit protein uS19 from Akkermansia muciniphila (strain ATCC BAA-835 / DSM 22959 / JCM 33894 / BCRC 81048 / CCUG 64013 / CIP 107961 / Muc).